Reading from the N-terminus, the 320-residue chain is Apolipoprotein E (320 aa).

Residues 1–18 (MKVLWAALLVAFLAGCQG) form the signal peptide. 8 repeat units span residues 82-103 (ALMEETMKELKAYKSELEEQLS), 104-125 (PVAEETRARLSKELQAAQARLG), 126-147 (ADMEDVRSRLAQYRSEVQAMLG), 148-169 (QSTDELRARLASHLRKLRKRLL), 170-191 (RDVDDLQKRLAVYQAGAREGAE), 192-213 (RGVSAIRERLGTLVEQGRARAA), 214-236 (TVGSSLASQPLQERAQAWGERLR), and 237-258 (ARMEEVGSRTRDRLDEVKEQVE). The segment at 82-258 (ALMEETMKEL…RLDEVKEQVE (177 aa)) is 8 X 22 AA approximate tandem repeats. Met145 carries the methionine sulfoxide modification. The residue at position 149 (Ser149) is a Phosphoserine. The tract at residues 160–170 (HLRKLRKRLLR) is LDL and other lipoprotein receptors binding. Residue 164-167 (LRKR) participates in heparin binding. Residues 212–293 (AATVGSSLAS…SWFEPLVEDM (82 aa)) form a lipid-binding and lipoprotein association region. Thr214 carries O-linked (GalNAc...) threonine glycosylation. Position 232–239 (232–239 (GERLRARM)) interacts with heparin. The interval 269 to 320 (QQMRLQAEAFQARLKSWFEPLVEDMQRQWAGLVEKVQAAVGASTTPVPSDNH) is homooligomerization. The segment at 281 to 293 (RLKSWFEPLVEDM) is specificity for association with VLDL.

Belongs to the apolipoprotein A1/A4/E family. Homotetramer. May interact with ABCA1; functionally associated with ABCA1 in the biogenesis of HDLs. May interact with APP/A4 amyloid-beta peptide; the interaction is extremely stable in vitro but its physiological significance is unclear. May interact with MAPT. May interact with MAP2. In the cerebrospinal fluid, interacts with secreted SORL1. Interacts with PMEL; this allows the loading of PMEL luminal fragment on ILVs to induce fibril nucleation. APOE exists as multiple glycosylated and sialylated glycoforms within cells and in plasma. The extent of glycosylation and sialylation are tissue and context specific. In terms of processing, glycated in plasma VLDL. Post-translationally, phosphorylated by FAM20C in the extracellular medium.

Its subcellular location is the secreted. The protein localises to the extracellular space. The protein resides in the extracellular matrix. It is found in the extracellular vesicle. It localises to the endosome. Its subcellular location is the multivesicular body. Its function is as follows. APOE is an apolipoprotein, a protein associating with lipid particles, that mainly functions in lipoprotein-mediated lipid transport between organs via the plasma and interstitial fluids. APOE is a core component of plasma lipoproteins and is involved in their production, conversion and clearance. Apolipoproteins are amphipathic molecules that interact both with lipids of the lipoprotein particle core and the aqueous environment of the plasma. As such, APOE associates with chylomicrons, chylomicron remnants, very low density lipoproteins (VLDL) and intermediate density lipoproteins (IDL) but shows a preferential binding to high-density lipoproteins (HDL). It also binds a wide range of cellular receptors including the LDL receptor/LDLR, the LDL receptor-related proteins LRP1, LRP2 and LRP8 and the very low-density lipoprotein receptor/VLDLR that mediate the cellular uptake of the APOE-containing lipoprotein particles. Finally, APOE also has a heparin-binding activity and binds heparan-sulfate proteoglycans on the surface of cells, a property that supports the capture and the receptor-mediated uptake of APOE-containing lipoproteins by cells. A main function of APOE is to mediate lipoprotein clearance through the uptake of chylomicrons, VLDLs, and HDLs by hepatocytes. APOE is also involved in the biosynthesis by the liver of VLDLs as well as their uptake by peripheral tissues ensuring the delivery of triglycerides and energy storage in muscle, heart and adipose tissues. By participating in the lipoprotein-mediated distribution of lipids among tissues, APOE plays a critical role in plasma and tissues lipid homeostasis. APOE is also involved in two steps of reverse cholesterol transport, the HDLs-mediated transport of cholesterol from peripheral tissues to the liver, and thereby plays an important role in cholesterol homeostasis. First, it is functionally associated with ABCA1 in the biogenesis of HDLs in tissues. Second, it is enriched in circulating HDLs and mediates their uptake by hepatocytes. APOE also plays an important role in lipid transport in the central nervous system, regulating neuron survival and sprouting. This Cebus capucinus (White-faced sapajou) protein is Apolipoprotein E (APOE).